Consider the following 164-residue polypeptide: CASP-like protein 1C1 (164 aa).

Over 1 to 7 (MVKLTKR) the chain is Cytoplasmic. The chain crosses the membrane as a helical span at residues 8-28 (IGGLVLRLAAFGAALAALIVM). The Extracellular segment spans residues 29 to 51 (ITSRERASFLAISLEAKYTDMAA). Residues 52–72 (FKYFVIANAVVSVYSFLVLFL) form a helical membrane-spanning segment. Residues 73 to 80 (PKESLLWK) lie on the Cytoplasmic side of the membrane. The chain crosses the membrane as a helical span at residues 81 to 101 (FVVVLDLVMTMLLTSSLSAAL). The Extracellular segment spans residues 102–129 (AVAQVGKKGNANAGWLPICGQVPKFCDQ). Residues 130 to 150 (ITGALIAGFVALVLYVLLLLY) form a helical membrane-spanning segment. The Cytoplasmic portion of the chain corresponds to 151–164 (SLHAVVDPFLLQKS).

It belongs to the Casparian strip membrane proteins (CASP) family. In terms of assembly, homodimer and heterodimers. Expressed in the stele of the root.

It localises to the cell membrane. In Arabidopsis thaliana (Mouse-ear cress), this protein is CASP-like protein 1C1.